A 143-amino-acid polypeptide reads, in one-letter code: Large ribosomal subunit protein uL11 (143 aa).

Belongs to the universal ribosomal protein uL11 family. As to quaternary structure, part of the ribosomal stalk of the 50S ribosomal subunit. Interacts with L10 and the large rRNA to form the base of the stalk. L10 forms an elongated spine to which L12 dimers bind in a sequential fashion forming a multimeric L10(L12)X complex. Post-translationally, one or more lysine residues are methylated.

Functionally, forms part of the ribosomal stalk which helps the ribosome interact with GTP-bound translation factors. The protein is Large ribosomal subunit protein uL11 of Nitrosomonas europaea (strain ATCC 19718 / CIP 103999 / KCTC 2705 / NBRC 14298).